Here is a 1453-residue protein sequence, read N- to C-terminus: Chromatin remodeling regulator CECR2 (1453 aa).

The disordered stretch occupies residues 170-237 (VQGRSNGELS…DLQTRNGSRG (68 aa)). A compositionally biased stretch (basic residues) spans 197–209 (TGKRRGRPPKRKK). Residues 210–222 (LQEEIISSEKQEE) show a composition bias toward basic and acidic residues. The span at 223–234 (NSLTSDLQTRNG) shows a compositional bias: polar residues. Serine 402 is modified (phosphoserine). The region spanning 414–518 (FELDDDFTAM…RCFHRAMTKH (105 aa)) is the Bromo domain. Phosphothreonine is present on threonine 526. Disordered regions lie at residues 536–667 (EKRE…HPPF), 767–796 (HGTT…TLGH), 827–868 (GYMQ…GESM), 884–1020 (VCPP…DNSY), 1046–1072 (VVGE…LCPR), 1131–1308 (LASM…YLYG), 1331–1368 (MLQT…VATQ), and 1396–1453 (QTGT…LDQS). The residue at position 551 (serine 551) is a Phosphoserine. The span at 637–649 (GSLQGSDPTNLHG) shows a compositional bias: polar residues. Residues 655–664 (EAPPGEPLQH) show a composition bias toward pro residues. A compositionally biased stretch (pro residues) spans 887–905 (PGVPYHPRQPTPPQLPGPF). Position 983 is a phosphoserine (serine 983). The segment covering 985-998 (QERETEDSQLKSDA) has biased composition (basic and acidic residues). Residues 999-1020 (SDSADTYKTSKNKNTWPLDNSY) are compositionally biased toward polar residues. Arginine 1166 and arginine 1172 each carry asymmetric dimethylarginine. Composition is skewed to low complexity over residues 1173–1187 (YSYQ…HPYQ) and 1202–1211 (QRSLPSQRSP). Residues 1228–1250 (NVLSSLQGCETLNTALTSPTQMD) show a composition bias toward polar residues. Residues 1265-1289 (GPEEEKMDESVERPESPKEFLDLDN) are compositionally biased toward basic and acidic residues. Residue serine 1280 is modified to Phosphoserine. Composition is skewed to polar residues over residues 1291 to 1304 (NAAT…STSD) and 1331 to 1346 (MLQT…SASH). Residues 1352–1364 (YPSPVPAHPPPHP) are compositionally biased toward pro residues.

Component of the CERF-1 ISWI chromatin remodeling complex (also called the CECR2-containing remodeling factor (CERF) complex) at least composed of CECR2 and SMARCA1. Component of the CERF-5 ISWI chromatin remodeling complex at least composed of CECR2 and SMARCA5/SNF2H. LUZP1 is detected as part of the CERF-1 and CERF-5 complexes in embryonic stem (ES) cells where it is involved in complex stabilization but is not detected in the complexes in the testis. Interacts with CCAR2; CCAR2 may form part of the CERF-1 and/or CEF-5 ISWI chromatin remodeling complexes in ES cells. Interacts with acetylated lysine residues on histone H2A and H3 (in vitro). Interacts with LRPPRC.

The protein resides in the nucleus. Its function is as follows. Regulatory subunit of the ATP-dependent CERF-1 and CERF-5 ISWI chromatin remodeling complexes, which form ordered nucleosome arrays on chromatin and facilitate access to DNA during DNA-templated processes such as DNA replication, transcription, and repair. The complexes do not have the ability to slide mononucleosomes to the center of a DNA template. The CERF-1 ISWI chromatin remodeling complex has a lower ATP hydrolysis rate than the CERF-5 ISWI chromatin remodeling complex. Plays a role in various processes during development: required during embryogenesis for neural tube closure and inner ear development. In adults, required for spermatogenesis, via the formation of ISWI-type chromatin complexes. In histone-modifying complexes, CECR2 recognizes and binds acylated histones: binds histones that are acetylated and/or butyrylated. May also be involved through its interaction with LRPPRC in the integration of cytoskeletal network with vesicular trafficking, nucleocytosolic shuttling, transcription, chromosome remodeling and cytokinesis. This chain is Chromatin remodeling regulator CECR2, found in Mus musculus (Mouse).